Reading from the N-terminus, the 209-residue chain is Uracil phosphoribosyltransferase (209 aa).

Residues R79, R104, and 131–139 (DPMLATGGS) contribute to the 5-phospho-alpha-D-ribose 1-diphosphate site. Uracil is bound by residues I194 and 199-201 (GDA). D200 lines the 5-phospho-alpha-D-ribose 1-diphosphate pocket.

This sequence belongs to the UPRTase family. It depends on Mg(2+) as a cofactor.

It catalyses the reaction UMP + diphosphate = 5-phospho-alpha-D-ribose 1-diphosphate + uracil. It participates in pyrimidine metabolism; UMP biosynthesis via salvage pathway; UMP from uracil: step 1/1. With respect to regulation, allosterically activated by GTP. In terms of biological role, catalyzes the conversion of uracil and 5-phospho-alpha-D-ribose 1-diphosphate (PRPP) to UMP and diphosphate. In Levilactobacillus brevis (strain ATCC 367 / BCRC 12310 / CIP 105137 / JCM 1170 / LMG 11437 / NCIMB 947 / NCTC 947) (Lactobacillus brevis), this protein is Uracil phosphoribosyltransferase.